The chain runs to 409 residues: Phosphatidylserine decarboxylase proenzyme, mitochondrial (409 aa).

A mitochondrion-targeting transit peptide spans methionine 1–lysine 52. Topologically, residues isoleucine 53 to leucine 63 are mitochondrial matrix. A helical membrane pass occupies residues leucine 64–glutamine 82. At tyrosine 83–leucine 409 the chain is on the mitochondrial intermembrane side. Residues aspartate 191, histidine 267, and serine 378 each act as charge relay system; for autoendoproteolytic cleavage activity in the active site. Residue serine 378 is the Schiff-base intermediate with substrate; via pyruvic acid; for decarboxylase activity of the active site. Serine 378 is subject to Pyruvic acid (Ser); by autocatalysis.

It belongs to the phosphatidylserine decarboxylase family. PSD-B subfamily. Eukaryotic type I sub-subfamily. In terms of assembly, heterodimer of a large membrane-associated beta subunit and a small pyruvoyl-containing alpha subunit. It depends on pyruvate as a cofactor. In terms of processing, is synthesized initially as an inactive proenzyme. Formation of the active enzyme involves a self-maturation process in which the active site pyruvoyl group is generated from an internal serine residue via an autocatalytic post-translational modification. Two non-identical subunits are generated from the proenzyme in this reaction, and the pyruvate is formed at the N-terminus of the alpha chain, which is derived from the carboxyl end of the proenzyme. The autoendoproteolytic cleavage occurs by a canonical serine protease mechanism, in which the side chain hydroxyl group of the serine supplies its oxygen atom to form the C-terminus of the beta chain, while the remainder of the serine residue undergoes an oxidative deamination to produce ammonia and the pyruvoyl prosthetic group on the alpha chain. During this reaction, the Ser that is part of the protease active site of the proenzyme becomes the pyruvoyl prosthetic group, which constitutes an essential element of the active site of the mature decarboxylase.

It is found in the mitochondrion inner membrane. The protein localises to the lipid droplet. The protein resides in the cytoplasm. It catalyses the reaction a 1,2-diacyl-sn-glycero-3-phospho-L-serine + H(+) = a 1,2-diacyl-sn-glycero-3-phosphoethanolamine + CO2. It participates in phospholipid metabolism; phosphatidylethanolamine biosynthesis. Catalyzes the formation of phosphatidylethanolamine (PtdEtn) from phosphatidylserine (PtdSer). Plays a central role in phospholipid metabolism and in the interorganelle trafficking of phosphatidylserine. May be involved in lipid droplet biogenesis at the endoplasmic reticulum membrane. The chain is Phosphatidylserine decarboxylase proenzyme, mitochondrial from Pongo abelii (Sumatran orangutan).